The sequence spans 517 residues: MRLGGPWAWLLGLPTAVVYGSLALFVSVLHNVFLLYYVDTFVSVYKIDKAAFWVGETVFLLWNSLNDPLFGWLSDRQFLSSQPRSGAGLSSRAVVLARVRALGWHGPLLALSFLAFWVPWAPAGLQFLLCLCLYDGFLTLVDLHHHALLADLALSAHDRTHLNFYCSLFSAAGSLSVFASYAFWNKEDFSSFRAFCLALATGSGLGFVGAARLLRRRVEAAGREPGCPAMAVNDGLCEEELLVGGEEAGSITLGQYLQQLARHRNFLWFVGMDLVQVFHCHFNSNFFPLFLEHLLSDHISLSTGSFLLGISYVAPHLNNLYFLPLCRRWGVYAVVRGLFLLKLGLSLLMLLAGPDHPGLLCLFIASNRVFTEGTCKLLTLVVTDLVDEDLVLNHRKQAASALLFGMVALVTKPGQTFAPLLGTWLLCFYTGHDLFQQHPPAPVGSAQPWPEPPAPPPAQAPPLRQGCFYLLVLVPIACALLQLFTWSQFTLHGRRLHMVKAQRQSLSRAQTLDVKMV.

The Extracellular segment spans residues 1 to 11 (MRLGGPWAWLL). A helical membrane pass occupies residues 12–43 (GLPTAVVYGSLALFVSVLHNVFLLYYVDTFVS). The Cytoplasmic portion of the chain corresponds to 44–55 (VYKIDKAAFWVG). Residues 56–74 (ETVFLLWNSLNDPLFGWLS) form a helical membrane-spanning segment. The Extracellular portion of the chain corresponds to 75 to 100 (DRQFLSSQPRSGAGLSSRAVVLARVR). Residues 101 to 118 (ALGWHGPLLALSFLAFWV) traverse the membrane as a helical segment. Topologically, residues 119-126 (PWAPAGLQ) are cytoplasmic. The helical transmembrane segment at 127–151 (FLLCLCLYDGFLTLVDLHHHALLAD) threads the bilayer. Residues 152-155 (LALS) lie on the Extracellular side of the membrane. The helical transmembrane segment at 156–179 (AHDRTHLNFYCSLFSAAGSLSVFA) threads the bilayer. Over 180 to 191 (SYAFWNKEDFSS) the chain is Cytoplasmic. The chain crosses the membrane as a helical span at residues 192-223 (FRAFCLALATGSGLGFVGAARLLRRRVEAAGR). Topologically, residues 224–264 (EPGCPAMAVNDGLCEEELLVGGEEAGSITLGQYLQQLARHR) are extracellular. The chain crosses the membrane as a helical span at residues 265 to 292 (NFLWFVGMDLVQVFHCHFNSNFFPLFLE). Topologically, residues 293-305 (HLLSDHISLSTGS) are cytoplasmic. A helical membrane pass occupies residues 306–325 (FLLGISYVAPHLNNLYFLPL). The Extracellular segment spans residues 326–330 (CRRWG). Residues 331-350 (VYAVVRGLFLLKLGLSLLML) traverse the membrane as a helical segment. At 351–358 (LAGPDHPG) the chain is on the cytoplasmic side. The chain crosses the membrane as a helical span at residues 359 to 393 (LLCLFIASNRVFTEGTCKLLTLVVTDLVDEDLVLN). Topologically, residues 394–402 (HRKQAASAL) are extracellular. The helical transmembrane segment at 403–429 (LFGMVALVTKPGQTFAPLLGTWLLCFY) threads the bilayer. Over 430 to 466 (TGHDLFQQHPPAPVGSAQPWPEPPAPPPAQAPPLRQG) the chain is Cytoplasmic. Residues 467 to 485 (CFYLLVLVPIACALLQLFT) form a helical membrane-spanning segment. The Extracellular portion of the chain corresponds to 486 to 517 (WSQFTLHGRRLHMVKAQRQSLSRAQTLDVKMV).

The protein resides in the cell membrane. The protein is Transmembrane protein 180 of Bos taurus (Bovine).